The primary structure comprises 756 residues: Cartilage oligomeric matrix protein (756 aa).

A signal peptide spans 1–20 (MVLAAARVLLLTLAALGASG). Positions 22-85 (GQMPLGGDLG…PARTPKLTVR (64 aa)) are COMP N-terminal. The region spanning 86–125 (PLSQCSPGFCFPGVACTETANGARCGPCPEGFTGNGSHCA) is the EGF-like 1 domain. 10 cysteine pairs are disulfide-bonded: C90-C101, C95-C110, C113-C124, C130-C141, C135-C150, C183-C196, C190-C205, C228-C242, C236-C252, and C254-C265. N-linked (GlcNAc...) asparagine glycosylation is present at N120. Residues 126–178 (DVNECTAHPCFPRVRCINTSPGFRCEACPPGFSGPTHEGVGLAFAKANKQVCT) enclose the EGF-like 2; calcium-binding domain. The EGF-like 3; calcium-binding domain maps to 179 to 218 (DINECETGQHNCVPNSVCVNTVGSFQCGPCQPGFVGDQAS). An EGF-like 4 domain is found at 224–266 (PQRFCPDGTPSPCHEKADCVLERDGSRSCVCAVGWAGNGLICG). TSP type-3 repeat units follow at residues 267-299 (RDTDLDGFPDEKLRCSERQCRKDNCVTVPNSGQ), 300-335 (EDVDQDGIGDACDPDADGDGVLNEKDNCPLVRNPDQ), 336-358 (RNTDGDKWGDACDNCRSQKNDDQ), 359-394 (KDTDKDGRGDACDDDIDGDRIRNPVDNCPKVPNSDQ), 395-417 (KDTDGDGVGDACDNCPQKSNADQ), 418-455 (RDVDHDFVGDACDSDQDQDGDGHQDSKDNCPTVPNSAQ), 456-491 (QDSDHDGQGDACDDDDDNDGVPDSRDNCRLVPNPGQ), and 492-527 (EDMDRDGVGDACQGDFDADKVVDKIDVCPENAEVTL). The disordered stretch occupies residues 322-502 (NEKDNCPLVR…DMDRDGVGDA (181 aa)). Basic and acidic residues-rich tracts occupy residues 333–345 (PDQRNTDGDKWGD), 351–369 (RSQKNDDQKDTDKDGRGDA), and 415–425 (ADQRDVDHDFV). The Cell attachment site motif lies at 366–368 (RGD). Residues 466–475 (ACDDDDDNDG) show a composition bias toward acidic residues. The segment at 526–756 (TLTDFRAFQT…DYEAQRLLQA (231 aa)) is mediates cell survival and induction of the IAP family of survival proteins. The 215-residue stretch at 531–745 (RAFQTVVLDP…LRYRCNDTIP (215 aa)) folds into the TSP C-terminal domain. N-linked (GlcNAc...) asparagine glycosylation is present at N741.

Belongs to the thrombospondin family. As to quaternary structure, pentamer; disulfide-linked. Exists in a more compact conformation in the presence of calcium and shows a more extended conformation in the absence of calcium. Interacts with ITGB3, ITGA5 and FN1. Binding to FN1 requires the presence of divalent cations (Ca(2+), Mg(2+) or Mn(2+)). The greatest amount of binding is seen in the presence of Mn(2+). Interacts with MATN1, MATN3, MATN4 and ACAN. Binds heparin, heparan sulfate and chondroitin sulfate. EDTA dimishes significantly its binding to ACAN and abolishes its binding to MATN3, MATN4 and chondroitin sulfate. Interacts with collagen I, II and IX, and interaction with these collagens is dependent on the presence of zinc ions. Interacts with ADAMTS12. Interacts with ITGA7. The cofactor is Ca(2+). Post-translationally, proteolytically cleaved by metalloproteases ADAMTS4 and ADAMTS1 with ADAMTS4 showing more potent activity.

The protein localises to the secreted. The protein resides in the extracellular space. It is found in the extracellular matrix. Functionally, plays a role in the structural integrity of cartilage via its interaction with other extracellular matrix proteins such as the collagens and fibronectin. Can mediate the interaction of chondrocytes with the cartilage extracellular matrix through interaction with cell surface integrin receptors. Could play a role in the pathogenesis of osteoarthritis. Potent suppressor of apoptosis in both primary chondrocytes and transformed cells. Suppresses apoptosis by blocking the activation of caspase-3 and by inducing the IAP family of survival proteins (BIRC3, BIRC2, BIRC5 and XIAP). Essential for maintaining a vascular smooth muscle cells (VSMCs) contractile/differentiated phenotype under physiological and pathological stimuli. Maintains this phenotype of VSMCs by interacting with ITGA7. The sequence is that of Cartilage oligomeric matrix protein (COMP) from Bos taurus (Bovine).